A 337-amino-acid chain; its full sequence is Heme A synthase (337 aa).

Helical transmembrane passes span 6 to 26 (ITKW…IGGI), 87 to 107 (FIHR…LIYF), 119 to 139 (LPYI…WYMV), 154 to 174 (LAFH…QLIK), and 192 to 212 (LIFS…GALV). Position 256 (H256) interacts with heme. 3 helical membrane passes run 258 to 278 (LGSY…LTIE), 285 to 305 (IAYF…ITLL), and 308 to 328 (VPII…SIII). Residue H316 coordinates heme.

This sequence belongs to the COX15/CtaA family. Type 2 subfamily. Interacts with CtaB. Heme b serves as cofactor.

It is found in the cell membrane. The catalysed reaction is Fe(II)-heme o + 2 A + H2O = Fe(II)-heme a + 2 AH2. It functions in the pathway porphyrin-containing compound metabolism; heme A biosynthesis; heme A from heme O: step 1/1. Functionally, catalyzes the conversion of heme O to heme A by two successive hydroxylations of the methyl group at C8. The first hydroxylation forms heme I, the second hydroxylation results in an unstable dihydroxymethyl group, which spontaneously dehydrates, resulting in the formyl group of heme A. In Rickettsia akari (strain Hartford), this protein is Heme A synthase.